A 176-amino-acid chain; its full sequence is Conidiation-specific protein 8 (176 aa).

Disordered stretches follow at residues 1 to 66 and 79 to 162; these read MDDT…SKLI and AASE…PQGF. Positions 79–99 are enriched in low complexity; that stretch reads AASEAFRSERSASTSSTTSET.

This chain is Conidiation-specific protein 8 (con-8), found in Neurospora crassa (strain ATCC 24698 / 74-OR23-1A / CBS 708.71 / DSM 1257 / FGSC 987).